The chain runs to 704 residues: Glycine--tRNA ligase beta subunit (704 aa).

It belongs to the class-II aminoacyl-tRNA synthetase family. Tetramer of two alpha and two beta subunits.

Its subcellular location is the cytoplasm. It catalyses the reaction tRNA(Gly) + glycine + ATP = glycyl-tRNA(Gly) + AMP + diphosphate. The protein is Glycine--tRNA ligase beta subunit of Rhizobium etli (strain CIAT 652).